The following is a 91-amino-acid chain: MSDTKTAPAYDTPIGLTNPPIDELLERTSSKYALVIYAAKRARQINDYYNQLGDGILEYVGPLVEPGLQEKPLSVALREIHADLLEHSEGE.

Belongs to the RNA polymerase subunit omega family. As to quaternary structure, the RNAP catalytic core consists of 2 alpha, 1 beta, 1 beta' and 1 omega subunit. When a sigma factor is associated with the core the holoenzyme is formed, which can initiate transcription.

The catalysed reaction is RNA(n) + a ribonucleoside 5'-triphosphate = RNA(n+1) + diphosphate. Its function is as follows. Promotes RNA polymerase assembly. Latches the N- and C-terminal regions of the beta' subunit thereby facilitating its interaction with the beta and alpha subunits. This chain is DNA-directed RNA polymerase subunit omega, found in Nocardia farcinica (strain IFM 10152).